The chain runs to 260 residues: MLFPRVVPFQSLRTAFQKKTFLPVSSAGNVFTPRFQLQAIRSIWIRSEETPNENALKFLPGLDILPPTIGSCEFMRGQGTVNSPLAQKLFDIDGVDSIFFGKDFITVSKGAGTEWAQMKPEVFSVIMEHLSNGSPVLSEEPLKGASDTQILESDSQIVAMIKELIETSIRPSIQEDGGDVEFRGFDEKTGTVSLKLRGACRTCSSSAVTLKNGIQQMLKHYIPEVENVVQVLDPEEEVAIAEFEKFEQRINGNKQKADNK.

Residues 161–231 are nifU; sequence IKELIETSIR…IPEVENVVQV (71 aa).

Belongs to the NifU family.

The protein is NifU-like protein C1709.19c of Schizosaccharomyces pombe (strain 972 / ATCC 24843) (Fission yeast).